We begin with the raw amino-acid sequence, 923 residues long: Inorganic phosphate transporter PHO87 (923 aa).

One can recognise an SPX domain in the interval 1 to 334 (MRFSHFLKYN…HMNTRQELIE (334 aa)). The Extracellular portion of the chain corresponds to 1 to 461 (MRFSHFLKYN…KLFFGKRAMK (461 aa)). Disordered regions lie at residues 40-74 (ETPTGDLNDDADSQTPGPIADIESNIAAGEPSSSK) and 86-107 (FGSKTPSGSKRGDSDEKAIDGN). The span at 95-104 (KRGDSDEKAI) shows a compositional bias: basic and acidic residues. Residue lysine 102 forms a Glycyl lysine isopeptide (Lys-Gly) (interchain with G-Cter in ubiquitin) linkage. N-linked (GlcNAc...) asparagine glycosylation is found at asparagine 162, asparagine 202, and asparagine 274. A helical transmembrane segment spans residues 462–482 (IGFIIIVTGVLLGVKTFNDPV). At 483–493 (EHRCMALVECC) the chain is on the cytoplasmic side. Residues 494 to 514 (AFLWASEAIPLHITGLLVPLL) traverse the membrane as a helical segment. The Extracellular segment spans residues 515 to 537 (TVLFRVLKDDDGKVMGAAAASTE). The chain crosses the membrane as a helical span at residues 538 to 558 (ILGTMWSSTIMILLAGFTLGE). The Cytoplasmic portion of the chain corresponds to 559-583 (ALSQYNVAKVLASWLLALAGTKPRN). A helical membrane pass occupies residues 584-604 (VLLMAMSVVFFLSMWISNVAS). Over 605 to 627 (PVLTYSLLTPLLDPLDYTSPFAK) the chain is Extracellular. A helical transmembrane segment spans residues 628–648 (ALVMGVALSADIGGMASPISS). The Cytoplasmic segment spans residues 649–667 (PQNIISMQYLKPYGIGWGQ). The helical transmembrane segment at 668 to 688 (FFAVALPTGILSMLCSWALMI) threads the bilayer. The Extracellular portion of the chain corresponds to 689-707 (LTFKIGKTKLEKFKPIRTR). The chain crosses the membrane as a helical span at residues 708-728 (FTIKQYFIIIVTIATILLWCV). At 729 to 735 (ESQIESA) the chain is on the cytoplasmic side. The chain crosses the membrane as a helical span at residues 736 to 756 (FGSSGEIAVIPIVLFFGTGLL). Topologically, residues 757-767 (STKDFNTFPWS) are extracellular. The chain crosses the membrane as a helical span at residues 768–788 (IVVLAMGGIALGKAVSSSGLL). Topologically, residues 789 to 802 (VTIARALQKKIQND) are cytoplasmic. A helical transmembrane segment spans residues 803 to 823 (GVFAILCIFGILMLVVGTFVS). The Extracellular portion of the chain corresponds to 824-849 (HTVSAIIIIPLVQEVGDKLSDPKAAP). Residues 850-870 (ILVFGCALLASCGMGLASSGF) form a helical membrane-spanning segment. Residues 871–898 (PNVTAISMTDKKGNRWLTVGAFISRGVP) are Cytoplasmic-facing. The chain crosses the membrane as a helical span at residues 899 to 919 (ASLLAFVCVITLGYGISSSVL). The Extracellular segment spans residues 920–923 (KGST).

The protein belongs to the CitM (TC 2.A.11) transporter family.

It is found in the membrane. Its function is as follows. Involved in the uptake of inorganic phosphate. The sequence is that of Inorganic phosphate transporter PHO87 (PHO87) from Saccharomyces cerevisiae (strain ATCC 204508 / S288c) (Baker's yeast).